The chain runs to 213 residues: Adenylate kinase (213 aa).

10–15 (GAGKGT) is a binding site for ATP. The interval 30–59 (AVGDIFRTIIKTSTSEAELINNYVKQGALI) is NMP. Residues Arg-36, 57–59 (ALI), 85–88 (GYPR), and Gln-92 contribute to the AMP site. The interval 123-161 (GRYSCKNCGKIYNVHFLQPKTDYVCDVCSSNVFDYRRDD) is LID. Arg-124 is an ATP binding site. Residues Cys-127 and Cys-130 each coordinate Zn(2+). 133 to 134 (IY) lines the ATP pocket. Cys-147 and Cys-150 together coordinate Zn(2+). AMP is bound by residues Arg-158 and Arg-169. Residue Lys-197 participates in ATP binding.

Belongs to the adenylate kinase family. Monomer.

The protein resides in the cytoplasm. The enzyme catalyses AMP + ATP = 2 ADP. It participates in purine metabolism; AMP biosynthesis via salvage pathway; AMP from ADP: step 1/1. Catalyzes the reversible transfer of the terminal phosphate group between ATP and AMP. Plays an important role in cellular energy homeostasis and in adenine nucleotide metabolism. This is Adenylate kinase from Rickettsia typhi (strain ATCC VR-144 / Wilmington).